The primary structure comprises 96 residues: Histone-like protein p6 (96 aa).

A DNA-binding region spans residues 1-19; sequence MAKMMQREITKTTVNVAKM.

The protein belongs to the phi29likevirus histone-like protein p6 family. As to quaternary structure, homodimer. Homomultimer. Binds to double-stranded DNA giving rise to multimeric nucleoprotein complexes. Binding specificity for the viral DNA is based on supercoiling, the viral genome having a negative superhelicity lower than that of plasmid DNA. Interacts with the DNA replication protein p17; this interaction optimizes the binding of protein p6 at the viral DNA ends, thus favoring the initiation of replication.

Functionally, histone-like nucleoprotein that binds to the viral dsDNA and responsible for wrapping and compacting the viral DNA about 4-fold. Forms a nucleoprotein complex in which the DNA adopts a right-handed toroidal conformation winding around a protein core. Binds ito most, if not all, the viral genome, although with different affinity, the highest one corresponding to the genome ends. The formation of the nucleoprotein complex at the genome ends, activates the initiation of viral DNA replication. The binding of p6 would recruit the complex formed by the TP and the DNA polymerase to the origin. Protein p6 also represses early transcription from promoter C2, and, together with protein p4, represses transcription from promoters A2b and A2c and activates late transcription from promoter A3. Protein p6 is therefore involved in the early to late transcription switch. The formation of the nucleoprotein complex at the right end of the phage genome where the early promoter C2 is located affects local topology, which may contribute to the promoter repression. The sequence is that of Histone-like protein p6 (6) from Bacillus phage PZA (Bacteriophage PZA).